We begin with the raw amino-acid sequence, 234 residues long: Homeobox protein ceh-51 (234 aa).

Disordered stretches follow at residues 128-154 (PPSF…RTPF) and 209-234 (QIKQ…HVIS). A DNA-binding region (homeobox) is located at residues 147 to 206 (RRGARTPFSDSQLYALRTRFEQCDTIKVDERRKLGAVIGLSPEQIKIWFQNRRFKLRKEK). Positions 220–234 (SAKEEAEEDQKHVIS) are enriched in basic and acidic residues.

It belongs to the NK-2 homeobox family.

The protein resides in the nucleus. Its function is as follows. Required for mesoderm development, including specification of muscle and coelomocyte precursors. The sequence is that of Homeobox protein ceh-51 from Caenorhabditis elegans.